The primary structure comprises 563 residues: Germacrene-A synthase (563 aa).

Mg(2+) contacts are provided by Asp-316, Asp-320, Asp-460, Thr-464, and Glu-468. The DDXXD motif motif lies at 316–320 (DDTYD).

This sequence belongs to the terpene synthase family. Tpsa subfamily. Mg(2+) serves as cofactor. Requires Mn(2+) as cofactor. High expression in disk florets, moderate expression in ray florets and detected in leaves and stems, but not in roots.

The enzyme catalyses (2E,6E)-farnesyl diphosphate = (+)-(R)-germacrene A + diphosphate. It participates in secondary metabolite biosynthesis; terpenoid biosynthesis. Sesquiterpene synthase involved in germacrene A biosynthesis. May be involved in the biosynthesis of the sesquiterpene lactone matricine, one of the major active compounds of chamomile flowers. This chain is Germacrene-A synthase, found in Matricaria chamomilla var. recutita (German chamomile).